We begin with the raw amino-acid sequence, 135 residues long: ATP synthase epsilon chain (135 aa).

Belongs to the ATPase epsilon chain family. In terms of assembly, F-type ATPases have 2 components, CF(1) - the catalytic core - and CF(0) - the membrane proton channel. CF(1) has five subunits: alpha(3), beta(3), gamma(1), delta(1), epsilon(1). CF(0) has three main subunits: a, b and c.

The protein localises to the cell inner membrane. Functionally, produces ATP from ADP in the presence of a proton gradient across the membrane. This Brucella abortus (strain S19) protein is ATP synthase epsilon chain.